Here is a 911-residue protein sequence, read N- to C-terminus: FIGNL1-interacting regulator of recombination and mitosis (911 aa).

The interval Ser-830–Thr-853 is disordered. Residues Pro-844–Thr-853 show a composition bias toward basic and acidic residues.

It is found in the chromosome. Its subcellular location is the centromere. It localises to the kinetochore. The protein resides in the nucleus. The protein localises to the midbody. It is found in the cytoplasm. Its subcellular location is the cytoskeleton. It localises to the spindle. Functionally, may play a role in chromosome segregation. The protein is FIGNL1-interacting regulator of recombination and mitosis of Danio rerio (Zebrafish).